The sequence spans 185 residues: Ribosome-recycling factor (185 aa).

This sequence belongs to the RRF family.

The protein localises to the cytoplasm. Responsible for the release of ribosomes from messenger RNA at the termination of protein biosynthesis. May increase the efficiency of translation by recycling ribosomes from one round of translation to another. This Streptococcus pneumoniae serotype 19F (strain G54) protein is Ribosome-recycling factor.